Here is a 189-residue protein sequence, read N- to C-terminus: Probable nicotinate-nucleotide adenylyltransferase (189 aa).

The protein belongs to the NadD family.

The catalysed reaction is nicotinate beta-D-ribonucleotide + ATP + H(+) = deamido-NAD(+) + diphosphate. The protein operates within cofactor biosynthesis; NAD(+) biosynthesis; deamido-NAD(+) from nicotinate D-ribonucleotide: step 1/1. In terms of biological role, catalyzes the reversible adenylation of nicotinate mononucleotide (NaMN) to nicotinic acid adenine dinucleotide (NaAD). The sequence is that of Probable nicotinate-nucleotide adenylyltransferase from Staphylococcus aureus (strain bovine RF122 / ET3-1).